The chain runs to 358 residues: G-protein coupled receptor 20 (358 aa).

Topologically, residues 1–48 are extracellular; the sequence is MPSVSPAGPSAGAVPNATAVTTVRTNASGLEVPLFHLFARLDEELHGT. Residues asparagine 16 and asparagine 26 are each glycosylated (N-linked (GlcNAc...) asparagine). Residues 49 to 69 form a helical membrane-spanning segment; sequence FPGLWLALMAVHGAIFLAGLV. Topologically, residues 70 to 86 are cytoplasmic; the sequence is LNGLALYVFCCRTRAKT. The helical transmembrane segment at 87 to 107 threads the bilayer; that stretch reads PSVIYTINLVVTDLLVGLSLP. Topologically, residues 108-125 are extracellular; the sequence is TRFAVYYGARGCLRCAFP. The chain crosses the membrane as a helical span at residues 126–146; the sequence is HVLGYFLNMHCSILFLTCICV. Over 147 to 168 the chain is Cytoplasmic; that stretch reads DRYLAIVRPEGSRRCRQPACAR. The chain crosses the membrane as a helical span at residues 169–189; the sequence is AVCAFVWLAAGAVTLSVLGVT. Topologically, residues 190–196 are extracellular; sequence GSRPCCR. Residues 197-217 form a helical membrane-spanning segment; sequence VFALTVLEFLLPLLVISVFTG. Residues 218–238 are Cytoplasmic-facing; it reads RIMCALSRPGLLHQGRQRRVR. The helical transmembrane segment at 239 to 259 threads the bilayer; it reads AMQLLLTVLIIFLVCFTPFHA. Residues 260-275 are Extracellular-facing; the sequence is RQVAVALWPDMPHHTS. The helical transmembrane segment at 276 to 296 threads the bilayer; that stretch reads LVVYHVAVTLSSLNSCMDPIV. At 297–358 the chain is on the cytoplasmic side; that stretch reads YCFVTSGFQA…TQALANGPEA (62 aa). Residues 315 to 339 are disordered; it reads HGEREPSSGDVVSMHRSSKGSGRHH. Residues 330–339 show a composition bias toward basic residues; the sequence is RSSKGSGRHH.

This sequence belongs to the G-protein coupled receptor 1 family. Ubiquitous with highest levels in intestinal tissues. In the brain detected in thalamus, putamen, and caudate, but not in frontal cortex, pons and hypothalamus.

Its subcellular location is the cell membrane. Its function is as follows. Orphan receptor with constitutive G(i) signaling activity that activate cyclic AMP. The sequence is that of G-protein coupled receptor 20 (GPR20) from Homo sapiens (Human).